We begin with the raw amino-acid sequence, 620 residues long: Apoptosis regulator MC163R (620 aa).

The chain crosses the membrane as a helical span at residues 113–133 (APLPLLLLPLLLPPMILLFFL).

The protein resides in the host mitochondrion. The protein localises to the host membrane. Functionally, plays a role in the inhibition of host apoptosis. Prevents host TNF-alpha-induced mitochondrial membrane permeabilization and reduces caspase-3/CASP3 and PARP1 cleavage induced by the intrinsic apoptotic pathway. This Homo sapiens (Human) protein is Apoptosis regulator MC163R (MC163R).